Reading from the N-terminus, the 41-residue chain is Large ribosomal subunit protein bL36 (41 aa).

This sequence belongs to the bacterial ribosomal protein bL36 family.

This is Large ribosomal subunit protein bL36 from Methylocella silvestris (strain DSM 15510 / CIP 108128 / LMG 27833 / NCIMB 13906 / BL2).